A 160-amino-acid chain; its full sequence is Nucleotide-binding protein Tgr7_1196 (160 aa).

Belongs to the YajQ family.

Functionally, nucleotide-binding protein. This chain is Nucleotide-binding protein Tgr7_1196, found in Thioalkalivibrio sulfidiphilus (strain HL-EbGR7).